A 984-amino-acid polypeptide reads, in one-letter code: Ephrin type-B receptor 1 (984 aa).

One can recognise an Eph LBD domain in the interval 1 to 182 (ETLMDTRTAT…FFKKCPSVVQ (182 aa)). Over 1–541 (ETLMDTRTAT…KSELREQLPL (541 aa)) the chain is Extracellular. 2 Fibronectin type-III domains span residues 303 to 413 (VPSG…TNQA) and 414 to 528 (APST…TLTD). 3 N-linked (GlcNAc...) asparagine glycosylation sites follow: Asn-315, Asn-407, and Asn-480. The helical transmembrane segment at 542–562 (IAGSAAAGVVFIVSLVAISIV) threads the bilayer. Residues 563–984 (CSRKRAYSKE…QMSQSPTSMA (422 aa)) are Cytoplasmic-facing. Residues 619–882 (VKIEEVIGAG…EIVNTLDKMI (264 aa)) enclose the Protein kinase domain. Residues 625–633 (IGAGEFGEV) and Lys-651 each bind ATP. Asp-744 acts as the Proton acceptor in catalysis. The SAM domain maps to 911–975 (TAFTSVEDWL…LNSIQSMRVQ (65 aa)). A PDZ-binding motif is present at residues 982 to 984 (SMA).

It belongs to the protein kinase superfamily. Tyr protein kinase family. Ephrin receptor subfamily. In terms of assembly, heterotetramer upon binding of the ligand. The heterotetramer is composed of an ephrin dimer and a receptor dimer. Oligomerization is probably required to induce biological responses. Phosphorylated. Autophosphorylation is stimulated by ligands. In terms of tissue distribution, expressed at high levels in the 10-day embryo, and in adult brain, lung, heart and skeletal muscle. Low levels of expression detected in all other adult tissues tested.

It localises to the cell membrane. Its subcellular location is the early endosome membrane. The protein resides in the cell projection. It is found in the dendrite. It catalyses the reaction L-tyrosyl-[protein] + ATP = O-phospho-L-tyrosyl-[protein] + ADP + H(+). Functionally, receptor tyrosine kinase which binds promiscuously transmembrane ephrin-B family ligands residing on adjacent cells, leading to contact-dependent bidirectional signaling into neighboring cells. The signaling pathway downstream of the receptor is referred to as forward signaling while the signaling pathway downstream of the ephrin ligand is referred to as reverse signaling. May play a role in axon guidance during nervous system development. May also play an important redundant role with other ephrin-B receptors in development and maturation of dendritic spines and synapse formation. More generally, may play a role in targeted cell migration and adhesion. Upon activation by ephrin-B ligands activates the MAPK/ERK and the JNK signaling cascades to regulate cell migration and adhesion respectively. This is Ephrin type-B receptor 1 (EPHB1) from Gallus gallus (Chicken).